A 163-amino-acid chain; its full sequence is Protein-export protein SecB (163 aa).

The protein belongs to the SecB family. In terms of assembly, homotetramer, a dimer of dimers. One homotetramer interacts with 1 SecA dimer.

It is found in the cytoplasm. In terms of biological role, one of the proteins required for the normal export of preproteins out of the cell cytoplasm. It is a molecular chaperone that binds to a subset of precursor proteins, maintaining them in a translocation-competent state. It also specifically binds to its receptor SecA. The polypeptide is Protein-export protein SecB (Pseudomonas aeruginosa (strain LESB58)).